The following is a 119-amino-acid chain: Large ribosomal subunit protein bL20 (119 aa).

It belongs to the bacterial ribosomal protein bL20 family.

Binds directly to 23S ribosomal RNA and is necessary for the in vitro assembly process of the 50S ribosomal subunit. It is not involved in the protein synthesizing functions of that subunit. The polypeptide is Large ribosomal subunit protein bL20 (Bordetella bronchiseptica (strain ATCC BAA-588 / NCTC 13252 / RB50) (Alcaligenes bronchisepticus)).